The sequence spans 472 residues: Serine/threonine-protein phosphatase T (472 aa).

TPR repeat units lie at residues 7-40 (ADKLKQLGNAAFSERKWHLAIDMYTKAIELTKTP), 41-73 (TLFCNRALAELRAELPGAALADADAALGIEPTF), and 74-107 (AKAYYHKASAYLSLGKHKQALTNYKKVVDLAPQN). The Mn(2+) site is built by Asp217, His219, Asp246, and Asn278. The active-site Proton donor/acceptor is His279. 2 residues coordinate Mn(2+): His327 and His403.

Belongs to the PPP phosphatase family. PP-5 (PP-T) subfamily. Mg(2+) serves as cofactor. Requires Mn(2+) as cofactor.

The protein localises to the cytoplasm. The protein resides in the cytosol. It is found in the nucleus. The catalysed reaction is O-phospho-L-seryl-[protein] + H2O = L-seryl-[protein] + phosphate. The enzyme catalyses O-phospho-L-threonyl-[protein] + H2O = L-threonyl-[protein] + phosphate. With respect to regulation, activated by arachidonic acid. In terms of biological role, may function as a protein phosphatase. The protein is Serine/threonine-protein phosphatase T of Trypanosoma brucei brucei (strain 927/4 GUTat10.1).